A 129-amino-acid polypeptide reads, in one-letter code: Glycine cleavage system H protein (129 aa).

In terms of domain architecture, Lipoyl-binding spans 23-104; sequence SVTVGITHHA…AYTAWLFKIK (82 aa). Residue K64 is modified to N6-lipoyllysine.

It belongs to the GcvH family. The glycine cleavage system is composed of four proteins: P, T, L and H. Requires (R)-lipoate as cofactor.

Its function is as follows. The glycine cleavage system catalyzes the degradation of glycine. The H protein shuttles the methylamine group of glycine from the P protein to the T protein. The chain is Glycine cleavage system H protein from Thiobacillus denitrificans (strain ATCC 25259 / T1).